We begin with the raw amino-acid sequence, 338 residues long: Increasing suppression factor 1 (338 aa).

The segment covering 50 to 70 (ENSSKSNNSHHSSSTNAGNTS) has biased composition (low complexity). The interval 50-72 (ENSSKSNNSHHSSSTNAGNTSRH) is disordered. Residue Ser119 is modified to Phosphoserine. A compositionally biased stretch (low complexity) spans 267-306 (SLLSNGSSSSPLQTRNNSYSNSLVKSPSNSSLNTSVASSN). The interval 267–322 (SLLSNGSSSSPLQTRNNSYSNSLVKSPSNSSLNTSVASSNEESSPHTSNCLEERNP) is disordered. Over residues 307–316 (EESSPHTSNC) the composition is skewed to polar residues.

It belongs to the ISF1/MBR1 family.

In terms of biological role, could influence the NAM7/UPF1 function, possibly at the level of mRNA turnover. Participates in mitochondrial biogenesis. This chain is Increasing suppression factor 1 (ISF1), found in Saccharomyces cerevisiae (strain JAY291) (Baker's yeast).